A 124-amino-acid polypeptide reads, in one-letter code: BLOC-1-related complex subunit 8 (124 aa).

Residues 102–124 are disordered; that stretch reads SSSQGRSAVINPNETPAHTSVTP.

This sequence belongs to the BORCS8 family.

It localises to the lysosome membrane. As part of a BORC-like complex, it may play a role in the movement and localization of lysosomes at the cell periphery. Associated with the cytosolic face of lysosomes, this complex may couple lysosomes to microtubule plus-end-directed kinesin motors, driving lysosome movement toward the cell periphery. This is BLOC-1-related complex subunit 8 from Danio rerio (Zebrafish).